The following is a 279-amino-acid chain: Epidermal growth factor-like protein 7 (279 aa).

Residues 1–21 form the signal peptide; it reads MWGSGELLVAWFLVLAAGGTT. One can recognise an EMI domain in the interval 28–109; the sequence is SRRVCTVGVS…TNGLPGACGA (82 aa). 9 disulfide bridges follow: Cys-32–Cys-94, Cys-57–Cys-63, Cys-93–Cys-107, Cys-112–Cys-122, Cys-116–Cys-128, Cys-130–Cys-139, Cys-146–Cys-157, Cys-153–Cys-166, and Cys-168–Cys-181. An EGF-like 1 domain is found at 108–140; that stretch reads GAAICQPPCGNEGSCIRPGRCRCPVGWQGDTCQ. Positions 131–133 match the Cell attachment site motif; it reads PVG. Residues 142–182 form the EGF-like 2; calcium-binding domain; that stretch reads DVDECSTGEARCPQRCVNTVGSYWCQCWEGQSPSADGVLCL. 2 coiled-coil regions span residues 200 to 224 and 250 to 274; these read SVVREEVYKLQARVDVLEQKLQLVL and FQQLDRIDSLSEQVSFLEEQLGSCS.

As to quaternary structure, interacts with ITGAV/ITGB3 in an RGD-dependent manner, increasing endothelial cell's motility.

The protein localises to the secreted. It localises to the extracellular space. Functionally, regulates vascular tubulogenesis in vivo. Inhibits platelet-derived growth factor (PDGF)-BB-induced smooth muscle cell migration and promotes endothelial cell adhesion to the extracellular matrix and angiogenesis. In Rattus norvegicus (Rat), this protein is Epidermal growth factor-like protein 7 (Egfl7).